The primary structure comprises 259 residues: NAD kinase (259 aa).

The active-site Proton acceptor is Asp-49. NAD(+)-binding positions include 49-50 (DG), Arg-54, 118-119 (NE), Asp-148, Ala-156, 159-164 (TAYNYS), and Ala-183.

It belongs to the NAD kinase family. The cofactor is a divalent metal cation.

The protein localises to the cytoplasm. The enzyme catalyses NAD(+) + ATP = ADP + NADP(+) + H(+). Its function is as follows. Involved in the regulation of the intracellular balance of NAD and NADP, and is a key enzyme in the biosynthesis of NADP. Catalyzes specifically the phosphorylation on 2'-hydroxyl of the adenosine moiety of NAD to yield NADP. This chain is NAD kinase, found in Xylella fastidiosa (strain Temecula1 / ATCC 700964).